A 254-amino-acid chain; its full sequence is 3-dehydroquinate dehydratase (254 aa).

3-dehydroquinate is bound by residues 47–49 (EFR) and R83. The active-site Proton donor/acceptor is H144. Catalysis depends on K171, which acts as the Schiff-base intermediate with substrate. 3-dehydroquinate contacts are provided by R213, S232, and Q236.

This sequence belongs to the type-I 3-dehydroquinase family. Homodimer.

The catalysed reaction is 3-dehydroquinate = 3-dehydroshikimate + H2O. Its pathway is metabolic intermediate biosynthesis; chorismate biosynthesis; chorismate from D-erythrose 4-phosphate and phosphoenolpyruvate: step 3/7. Its function is as follows. Involved in the third step of the chorismate pathway, which leads to the biosynthesis of aromatic amino acids. Catalyzes the cis-dehydration of 3-dehydroquinate (DHQ) and introduces the first double bond of the aromatic ring to yield 3-dehydroshikimate. In Neisseria meningitidis serogroup B (strain ATCC BAA-335 / MC58), this protein is 3-dehydroquinate dehydratase.